A 105-amino-acid polypeptide reads, in one-letter code: Dynein axonemal light chain 4 (105 aa).

Belongs to the dynein light chain family. As to quaternary structure, consists of at least two heavy chains and a number of intermediate and light chains.

The protein localises to the cytoplasm. It is found in the cytoskeleton. Its subcellular location is the cilium axoneme. In terms of biological role, force generating protein of respiratory cilia. Produces force towards the minus ends of microtubules. Dynein has ATPase activity. The sequence is that of Dynein axonemal light chain 4 (DNAL4) from Bos taurus (Bovine).